The following is a 523-amino-acid chain: Glucose-1-phosphate adenylyltransferase large subunit 1, chloroplastic/amyloplastic (523 aa).

A chloroplast-targeting transit peptide spans 1–49 (MSSMQFSSVLPLEGKACVSPVRREGSACERLKIGDSSSIRHERASRRMC).

Belongs to the bacterial/plant glucose-1-phosphate adenylyltransferase family. As to quaternary structure, heterotetramer. Starchy endosperm and roots.

The protein resides in the plastid. It is found in the chloroplast. Its subcellular location is the amyloplast. The enzyme catalyses alpha-D-glucose 1-phosphate + ATP + H(+) = ADP-alpha-D-glucose + diphosphate. It participates in glycan biosynthesis; starch biosynthesis. With respect to regulation, highly active without 3'phosphoglycerate, and is only slightly affected by the activator 3'phosphoglycerate and inhibitor orthophosphate. Its function is as follows. This protein plays a role in synthesis of starch. It catalyzes the synthesis of the activated glycosyl donor, ADP-glucose from Glc-1-P and ATP. The chain is Glucose-1-phosphate adenylyltransferase large subunit 1, chloroplastic/amyloplastic from Hordeum vulgare (Barley).